The sequence spans 154 residues: Large ribosomal subunit protein uL13 (154 aa).

This sequence belongs to the universal ribosomal protein uL13 family. As to quaternary structure, part of the 50S ribosomal subunit.

Functionally, this protein is one of the early assembly proteins of the 50S ribosomal subunit, although it is not seen to bind rRNA by itself. It is important during the early stages of 50S assembly. The sequence is that of Large ribosomal subunit protein uL13 from Rhodopseudomonas palustris (strain ATCC BAA-98 / CGA009).